Reading from the N-terminus, the 317-residue chain is uncharacterized protein (317 aa).

Positions 1-16 (MKLSFILSTLVAGALA) are cleaved as a signal peptide. An N-linked (GlcNAc...) asparagine glycan is attached at Asn42. Composition is skewed to low complexity over residues 150–238 (SSST…SSSS) and 247–259 (TAST…ASSA). The segment at 150-259 (SSSTPSSSSS…TDDSSSASSA (110 aa)) is disordered.

This is an uncharacterized protein from Schizosaccharomyces pombe (strain 972 / ATCC 24843) (Fission yeast).